A 485-amino-acid polypeptide reads, in one-letter code: Glutamyl-tRNA(Gln) amidotransferase subunit A (485 aa).

Catalysis depends on charge relay system residues Lys79 and Ser154. The active-site Acyl-ester intermediate is Ser178.

Belongs to the amidase family. GatA subfamily. As to quaternary structure, heterotrimer of A, B and C subunits.

It catalyses the reaction L-glutamyl-tRNA(Gln) + L-glutamine + ATP + H2O = L-glutaminyl-tRNA(Gln) + L-glutamate + ADP + phosphate + H(+). Functionally, allows the formation of correctly charged Gln-tRNA(Gln) through the transamidation of misacylated Glu-tRNA(Gln) in organisms which lack glutaminyl-tRNA synthetase. The reaction takes place in the presence of glutamine and ATP through an activated gamma-phospho-Glu-tRNA(Gln). In Staphylococcus aureus (strain Mu3 / ATCC 700698), this protein is Glutamyl-tRNA(Gln) amidotransferase subunit A.